Here is a 144-residue protein sequence, read N- to C-terminus: Vasopressin-neurophysin 2-copeptin (144 aa).

A disulfide bridge connects residues C1 and C6. G9 bears the Glycine amide mark. 7 disulfide bridges follow: C22–C66, C25–C39, C33–C56, C40–C46, C73–C85, C79–C97, and C86–C91. An N-linked (GlcNAc...) asparagine glycan is attached at N112.

The protein belongs to the vasopressin/oxytocin family. As to quaternary structure, interacts with vasopressin receptors V1bR/AVPR1B (Ki=85 pM), V1aR/AVPR1A (Ki=0.6 nM) and V2R/AVPR2 (Ki=4.9 nM). Interacts with oxytocin receptor (OXTR) (Ki=110 nM).

Its subcellular location is the secreted. Functionally, neurophysin 2 specifically binds vasopressin. Vasopressin has a direct antidiuretic action on the kidney, it also causes vasoconstriction of the peripheral vessels. Acts by binding to vasopressin receptors (V1bR/AVPR1B, V1aR/AVPR1A, and V2R/AVPR2). This chain is Vasopressin-neurophysin 2-copeptin (AVP), found in Cavia porcellus (Guinea pig).